We begin with the raw amino-acid sequence, 83 residues long: Small ribosomal subunit protein eS21 (83 aa).

Belongs to the eukaryotic ribosomal protein eS21 family. Component of the 40S small ribosomal subunit.

The protein localises to the cytoplasm. It is found in the cytosol. It localises to the rough endoplasmic reticulum. The polypeptide is Small ribosomal subunit protein eS21 (RpS21) (Agriotes lineatus (Lined click beetle)).